The primary structure comprises 156 residues: Cyanate hydratase (156 aa).

Catalysis depends on residues Arg96, Glu99, and Ser122.

Belongs to the cyanase family.

The catalysed reaction is cyanate + hydrogencarbonate + 3 H(+) = NH4(+) + 2 CO2. Functionally, catalyzes the reaction of cyanate with bicarbonate to produce ammonia and carbon dioxide. This chain is Cyanate hydratase, found in Escherichia coli O9:H4 (strain HS).